A 380-amino-acid polypeptide reads, in one-letter code: 3-isopropylmalate dehydrogenase (380 aa).

79-90 contacts NAD(+); it reads GPEWAGVHPTPE. Residues arginine 97, arginine 107, arginine 136, and aspartate 229 each coordinate substrate. The Mg(2+) site is built by aspartate 229, aspartate 254, and aspartate 258. 294–306 contacts NAD(+); sequence GSAPDISGKGLAN.

It belongs to the isocitrate and isopropylmalate dehydrogenases family. As to quaternary structure, homodimer. Mg(2+) serves as cofactor. Mn(2+) is required as a cofactor.

The protein localises to the cytoplasm. It carries out the reaction (2R,3S)-3-isopropylmalate + NAD(+) = 4-methyl-2-oxopentanoate + CO2 + NADH. It functions in the pathway amino-acid biosynthesis; L-leucine biosynthesis; L-leucine from 3-methyl-2-oxobutanoate: step 3/4. Catalyzes the oxidation of 3-carboxy-2-hydroxy-4-methylpentanoate (3-isopropylmalate) to 3-carboxy-4-methyl-2-oxopentanoate. The product decarboxylates to 4-methyl-2 oxopentanoate. In Hapsidospora chrysogena (Acremonium chrysogenum), this protein is 3-isopropylmalate dehydrogenase (LEU2).